The primary structure comprises 945 residues: Valine--tRNA ligase (945 aa).

A 'HIGH' region motif is present at residues 42 to 52 (PNVTGTLHMGH). The 'KMSKS' region signature appears at 552–556 (KMSKS). An ATP-binding site is contributed by K555. Residues 879–945 (DKATETARLS…VQTQLSKLKD (67 aa)) adopt a coiled-coil conformation.

It belongs to the class-I aminoacyl-tRNA synthetase family. ValS type 1 subfamily. Monomer.

The protein resides in the cytoplasm. The enzyme catalyses tRNA(Val) + L-valine + ATP = L-valyl-tRNA(Val) + AMP + diphosphate. Its function is as follows. Catalyzes the attachment of valine to tRNA(Val). As ValRS can inadvertently accommodate and process structurally similar amino acids such as threonine, to avoid such errors, it has a 'posttransfer' editing activity that hydrolyzes mischarged Thr-tRNA(Val) in a tRNA-dependent manner. In Neisseria meningitidis serogroup A / serotype 4A (strain DSM 15465 / Z2491), this protein is Valine--tRNA ligase.